Here is a 408-residue protein sequence, read N- to C-terminus: Phosphopentomutase (408 aa).

Aspartate 10, aspartate 307, histidine 312, aspartate 348, histidine 349, and histidine 360 together coordinate Mn(2+).

The protein belongs to the phosphopentomutase family. Mn(2+) is required as a cofactor.

The protein localises to the cytoplasm. The catalysed reaction is 2-deoxy-alpha-D-ribose 1-phosphate = 2-deoxy-D-ribose 5-phosphate. The enzyme catalyses alpha-D-ribose 1-phosphate = D-ribose 5-phosphate. Its pathway is carbohydrate degradation; 2-deoxy-D-ribose 1-phosphate degradation; D-glyceraldehyde 3-phosphate and acetaldehyde from 2-deoxy-alpha-D-ribose 1-phosphate: step 1/2. Functionally, isomerase that catalyzes the conversion of deoxy-ribose 1-phosphate (dRib-1-P) and ribose 1-phosphate (Rib-1-P) to deoxy-ribose 5-phosphate (dRib-5-P) and ribose 5-phosphate (Rib-5-P), respectively. The protein is Phosphopentomutase of Proteus mirabilis (strain HI4320).